The primary structure comprises 357 residues: Arginine kinase Scy p 2.0101 (357 aa).

Positions 9–91 (KLEEGFKKLE…FDPIIEDYHK (83 aa)) constitute a Phosphagen kinase N-terminal domain. Position 64–68 (64–68 (GVGVY)) interacts with L-arginine. 2 igE-binding and beta-hexosaminidase release from rat basophilic leukemia (RBL) cells regions span residues 113 to 127 (VDPDGKFVISTRVRC) and 127 to 155 (CGRSMEGYPFNPCLTEAQYKEMESKVSST). In terms of domain architecture, Phosphagen kinase C-terminal spans 119 to 356 (FVISTRVRCG…LELIKIEKEM (238 aa)). 122 to 126 (STRVR) is an ATP binding site. Position 185 (His-185) interacts with ATP. Cys-201 and Cys-271 are joined by a disulfide. The interval 204-218 (WPTGRGIYHNDNKTF) is igE-binding and beta-hexosaminidase release from rat basophilic leukemia (RBL) cells. The igE-binding, but no beta-hexosaminidase release from rat basophilic leukemia (RBL) cells stretch occupies residues 211 to 225 (YHNDNKTFLVWCNEE). Glu-225 lines the L-arginine pocket. An ATP-binding site is contributed by Arg-229. Cys-271 is a binding site for L-arginine. Residues 280–284 (RASVH) and 309–314 (RGTRGE) each bind ATP. Glu-314 provides a ligand contact to L-arginine. An igE-binding, but no beta-hexosaminidase release from rat basophilic leukemia (RBL) cells region spans residues 316–330 (TEAEGGVYDISNKRR).

This sequence belongs to the ATP:guanido phosphotransferase family. Glycosylated. As to expression, muscle (at protein level).

It catalyses the reaction L-arginine + ATP = N(omega)-phospho-L-arginine + ADP + H(+). Its function is as follows. Catalyzes the reversible transfer of high energy ATP gamma-phosphate group to L-arginine. The protein is Arginine kinase Scy p 2.0101 of Scylla paramamosain (Mud crab).